Reading from the N-terminus, the 302-residue chain is Sulfate adenylyltransferase subunit 2 (302 aa).

Belongs to the PAPS reductase family. CysD subfamily. As to quaternary structure, heterodimer composed of CysD, the smaller subunit, and CysN.

It catalyses the reaction sulfate + ATP + H(+) = adenosine 5'-phosphosulfate + diphosphate. The protein operates within sulfur metabolism; hydrogen sulfide biosynthesis; sulfite from sulfate: step 1/3. With CysN forms the ATP sulfurylase (ATPS) that catalyzes the adenylation of sulfate producing adenosine 5'-phosphosulfate (APS) and diphosphate, the first enzymatic step in sulfur assimilation pathway. APS synthesis involves the formation of a high-energy phosphoric-sulfuric acid anhydride bond driven by GTP hydrolysis by CysN coupled to ATP hydrolysis by CysD. The sequence is that of Sulfate adenylyltransferase subunit 2 from Photorhabdus laumondii subsp. laumondii (strain DSM 15139 / CIP 105565 / TT01) (Photorhabdus luminescens subsp. laumondii).